Consider the following 367-residue polypeptide: MNLLTVSTDLISIFLFTTLFLFFARKVAKKVGLVDKPNFRKRHQGLIPLVGGISVYAGICFTFGIVDYYIPHASLYLACAGVLVFIGALDDRFDISVKIRATIQAAVGIVMMVFGNLYLSSLGYIFGSWEMVLGPFGYFLTLFAVWAAINAFNMVDGIDGLLGGLSCVSFAAIGMILWFDGQTSLAIWCFAMIAAILPYIMLNLGILGRRYKVFMGDAGSTLIGFTVIWILLETTQGKTHPISPVTALWIIAIPLMDMVAIMYRRLRKGMSPFSPDRQHIHHLIMRAGFTSRQAFVLITLAAALLASIGVLAEYSHFVPEWVMLVLFLLAFLLYGYCIKRAWKVARFIKRVKRRLRRNRGGSPNLTK.

Transmembrane regions (helical) follow at residues 3 to 23 (LLTVSTDLISIFLFTTLFLFF), 46 to 66 (LIPLVGGISVYAGICFTFGIV), 69 to 89 (YIPHASLYLACAGVLVFIGAL), 132 to 152 (VLGPFGYFLTLFAVWAAINAF), 158 to 178 (IDGLLGGLSCVSFAAIGMILW), 187 to 207 (IWCFAMIAAILPYIMLNLGIL), 213 to 233 (VFMGDAGSTLIGFTVIWILLE), 242 to 262 (ISPVTALWIIAIPLMDMVAIM), 294 to 314 (AFVLITLAAALLASIGVLAEY), and 318 to 338 (VPEWVMLVLFLLAFLLYGYCI).

It belongs to the glycosyltransferase 4 family. WecA subfamily. The cofactor is Mg(2+). Mn(2+) serves as cofactor.

It is found in the cell inner membrane. The catalysed reaction is di-trans,octa-cis-undecaprenyl phosphate + UDP-N-acetyl-alpha-D-glucosamine = N-acetyl-alpha-D-glucosaminyl-di-trans,octa-cis-undecaprenyl diphosphate + UMP. It functions in the pathway bacterial outer membrane biogenesis; LPS O-antigen biosynthesis. Its pathway is bacterial outer membrane biogenesis; enterobacterial common antigen biosynthesis. Catalyzes the transfer of the GlcNAc-1-phosphate moiety from UDP-GlcNAc onto the carrier lipid undecaprenyl phosphate (C55-P), yielding GlcNAc-pyrophosphoryl-undecaprenyl (GlcNAc-PP-C55). In Escherichia coli O157:H7, this protein is Undecaprenyl-phosphate alpha-N-acetylglucosaminyl 1-phosphate transferase.